We begin with the raw amino-acid sequence, 222 residues long: MAGFKVAIDGPAGSGKSSISKNVAHKLGMTHIDTGAMYRAVTLLAIENQIDMNDESQYRFLEDVQITYRDDHIYIGDRIVEKEIRSKAVTDHVSLVSSFPYVRKKLVEIQQKLGETNNIIMDGRDIGTVVLPDADLKIFLIADVRERAKRRQQDKQNQGYEVDIEKLIEEITRRDQLDSQRKISPLKKAEDAIVVDSTHMSLQQTVKKIIELIQSAKGVINE.

Residue 10 to 18 participates in ATP binding; the sequence is GPAGSGKSS.

Belongs to the cytidylate kinase family. Type 1 subfamily.

The protein resides in the cytoplasm. The catalysed reaction is CMP + ATP = CDP + ADP. The enzyme catalyses dCMP + ATP = dCDP + ADP. The polypeptide is Cytidylate kinase (Acholeplasma laidlawii (strain PG-8A)).